Consider the following 1138-residue polypeptide: Envelopment polyprotein (1138 aa).

An N-terminal signal peptide occupies residues 1 to 18 (MEGWYLVVLGVCYTLTLA). The Lumenal portion of the chain corresponds to 19–487 (MPKTIYELKM…CVPGLHGWAT (469 aa)). Disulfide bonds link cysteine 30–cysteine 155, cysteine 64–cysteine 161, cysteine 113–cysteine 132, cysteine 137–cysteine 142, cysteine 179–cysteine 189, cysteine 214–cysteine 250, cysteine 239–cysteine 354, cysteine 379–cysteine 438, cysteine 383–cysteine 392, cysteine 408–cysteine 427, and cysteine 455–cysteine 478. Asparagine 138 is a glycosylation site (N-linked (GlcNAc...) asparagine; by host). Residue asparagine 350 is glycosylated (N-linked (GlcNAc...) asparagine; by host). The N-linked (GlcNAc...) asparagine; by host glycan is linked to asparagine 402. A helical transmembrane segment spans residues 488 to 508 (VMLLSTFCFGWVLIPAVTLII). The Cytoplasmic portion of the chain corresponds to 509-630 (LKCLRVLTFS…LGVFRYKSRC (122 aa)). Positions 519-536 (CSHYTNESKFKFILEKVK) are binding to the ribonucleoprotein. 2 CCHC-type zinc fingers span residues 548-568 (CDVCHHECETAKELESHRQSC) and 573-594 (CPYCMTITEATESALQAHYSIC). Binding to the ribonucleoprotein stretches follow at residues 591–608 (YSICKLTGRFQEALKKSL), 595–606 (KLTGRFQEALKK), and 614–628 (KKGCYRTLGVFRYKS). The interaction with host TRAF3 stretch occupies residues 610–637 (KPEVKKGCYRTLGVFRYKSRCYVGLVWC). Residues 614-637 (KKGCYRTLGVFRYKSRCYVGLVWC) enclose the ITAM domain. Phosphotyrosine occurs at positions 618 and 631. The short motif at 618–621 (YRTL) is the YxxL element. The chain crosses the membrane as a helical span at residues 631–651 (YVGLVWCLLLTCEIVIWAASA). At 652-1107 (ETPLMESGWS…EWLLGILNGN (456 aa)) the chain is on the lumenal side. 8 disulfide bridges follow: cysteine 738–cysteine 773, cysteine 742–cysteine 780, cysteine 754–cysteine 887, cysteine 768–cysteine 898, cysteine 783–cysteine 906, cysteine 809–cysteine 818, cysteine 826–cysteine 835, and cysteine 866–cysteine 870. The interval 760-780 (YQYETGWGCNPGDCPGVGTGC) is fusion loop. A glycan (N-linked (GlcNAc...) asparagine; by host) is linked at asparagine 930. Disulfide bonds link cysteine 972-cysteine 1002, cysteine 995-cysteine 1047, cysteine 1012-cysteine 1017, cysteine 1048-cysteine 1053, and cysteine 1087-cysteine 1091. A helical transmembrane segment spans residues 1108–1128 (WIVVVVLVVILILSIIMFSVL). Residues 1124–1138 (MFSVLCPRRGHKKTV) are binding to the ribonucleoprotein. Residues 1129–1138 (CPRRGHKKTV) lie on the Cytoplasmic side of the membrane.

This sequence belongs to the hantavirus envelope glycoprotein family. As to quaternary structure, homodimer. Homotetramer; forms heterotetrameric Gn-Gc spikes in the pre-fusion conformation. Interacts (via C-terminus) with the nucleoprotein. Interacts with host TUFM; this interaction contributes to the virus-induced degradation of mitochondria by autophagy, which leads to degradation of host MAVS and inhibition of type I interferon (IFN) responses. Interacts with host MAP1LC3B; this interaction contributes to the virus-induced degradation of mitochondria by autophagy, which leads to degradation of host MAVS and inhibition of type I interferon (IFN) responses. Interacts (via C-terminus) with host TRAF3; this interaction inhibits the formation of TRAF3-TBK1 complexes. Homodimer. Homotetramer; forms heterotetrameric Gn-Gc spikes in the pre-fusion conformation. Homotrimer; forms homotrimer in the post-fusion conformation at acidic pH. Interacts (via C-terminus) with the nucleoprotein. Envelope polyprotein precursor is quickly cleaved in vivo just after synthesis, presumably by host signal peptidase.

It localises to the virion membrane. Its subcellular location is the host cell surface. The protein localises to the host Golgi apparatus membrane. It is found in the host endoplasmic reticulum membrane. The protein resides in the host mitochondrion. In terms of biological role, forms homotetramers with glycoprotein C at the surface of the virion. Attaches the virion to host cell receptors including integrin ITGAV/ITGB3. This attachment induces virion internalization possibly through clathrin-dependent endocytosis and dynamin-independent macropinocytosis. Mediates the assembly and budding of infectious virus particles through its interaction with the nucleocapsid protein and the viral genome. May dysregulate normal immune and endothelial cell responses through an ITAM motif. Translocates to mitochondria, binds to host TUFM and recruits MAP1LC3B. These interactions induce mitochondrial autophagy and therefore destruction of host MAVS leading to inhibition of type I interferon (IFN) responses. Concomitant breakdown of glycoprotein N is apparently prevented by the nucleoprotein that may inhibit Gn-stimulated autophagosome-lysosome fusion. Interacts with the viral genomic RNA. Inhibits the host RIG-I/TBK1 pathway by disrupting the formation of TBK1-TRAF3 complexes and downstream signaling responses required for IFN-beta transcription. Its function is as follows. Forms homotetramers with glycoprotein N at the surface of the virion. Attaches the virion to host cell receptors including integrin ITGAV/ITGB3. This attachment induces virion internalization predominantly through clathrin-dependent endocytosis. Class II fusion protein that promotes fusion of viral membrane with host endosomal membrane after endocytosis of the virion. This Abrothrix longipilis (Long-haired grass mouse) protein is Envelopment polyprotein (GP).